A 463-amino-acid polypeptide reads, in one-letter code: MTTETRSLYSQLPAIDRLLRDSSFLSLRDTYGHTRVVELLRQMLDEAREVIRDSQTLPAWCENWAQEVDARLTKEAQSALRPVINLTGTVLHTNLGRALQAEAAVEAVAQAMRSPVTLEYDLDDAGRGHRDRALAQLLCRITGAEDACIVNNNAAAVLLMLAATASGKEVVVSRGELVEIGGAFRIPDVMRQAGCTLHEVGTTNRTHANDYRQAVNENTALLMKVHTSNYSIQGFTKAIDEAELVALGKELDVPVVTDLGSGSLVDLSQYGLPKEPMPQELIAAGVSLVSFSGDKLLGGPQAGIIVGKKEMIARLQSHPLKRALRADKMTLAALEATLRLYLHPEALSEKLPTLRLLTRSAEVIQIQAQRLQAPLAAHYGAEFAVQVMPCLSQIGSGSLPVDRLPSAALTFTPHDGRGSHLESLAARWRELPVPVIGRIYDGRLWLDLRCLEDEQRFLEMLLK.

N6-(pyridoxal phosphate)lysine is present on lysine 295.

This sequence belongs to the SelA family. In terms of assembly, homodecamer; pentamer of dimers. Binds only one seryl-tRNA(Sec) per dimer. Requires pyridoxal 5'-phosphate as cofactor.

It localises to the cytoplasm. The catalysed reaction is L-seryl-tRNA(Sec) + selenophosphate + H(+) = L-selenocysteinyl-tRNA(Sec) + phosphate. It participates in aminoacyl-tRNA biosynthesis; selenocysteinyl-tRNA(Sec) biosynthesis; selenocysteinyl-tRNA(Sec) from L-seryl-tRNA(Sec) (bacterial route): step 1/1. Its function is as follows. Converts seryl-tRNA(Sec) to selenocysteinyl-tRNA(Sec) required for selenoprotein biosynthesis. This chain is L-seryl-tRNA(Sec) selenium transferase, found in Shigella boydii serotype 18 (strain CDC 3083-94 / BS512).